Reading from the N-terminus, the 136-residue chain is Large ribosomal subunit protein uL16 (136 aa).

This sequence belongs to the universal ribosomal protein uL16 family. As to quaternary structure, part of the 50S ribosomal subunit.

Its function is as follows. Binds 23S rRNA and is also seen to make contacts with the A and possibly P site tRNAs. The polypeptide is Large ribosomal subunit protein uL16 (Ehrlichia ruminantium (strain Gardel)).